The sequence spans 926 residues: Chitin synthase-like protein 2 (926 aa).

The tract at residues 1-56 (MSFQNPSYINAKHRSFLQPKDTQDSQDLRNWVSHSSVDEETAYSSSTLSSSSSKSF) is disordered. Positions 44-55 (SSSTLSSSSSKS) are enriched in low complexity. The next 7 helical transmembrane spans lie at 564–584 (INSS…LWTT), 599–619 (LVFA…FLAF), 641–661 (LFLV…MLAM), 671–691 (LLFI…FCVF), 721–741 (LLIL…FFIF), 853–873 (VLVW…VFDG), and 885–905 (IFWS…TFIA).

The protein belongs to the chitin synthase family.

The protein localises to the membrane. Functionally, plays a role in septum formation. Has no chitin synthase activity. This chain is Chitin synthase-like protein 2 (chs2), found in Schizosaccharomyces pombe (strain 972 / ATCC 24843) (Fission yeast).